The sequence spans 449 residues: Aminopeptidase C (449 aa).

Residues cysteine 70, histidine 364, and asparagine 385 contribute to the active site.

This sequence belongs to the peptidase C1 family. Homohexamer.

The protein localises to the cytoplasm. It catalyses the reaction Inactivates bleomycin B2 (a cytotoxic glycometallopeptide) by hydrolysis of a carboxyamide bond of beta-aminoalanine, but also shows general aminopeptidase activity. The specificity varies somewhat with source, but amino acid arylamides of Met, Leu and Ala are preferred.. This is Aminopeptidase C (pepC) from Lactobacillus delbrueckii subsp. lactis.